The following is a 382-amino-acid chain: Gap junction alpha-1 protein (382 aa).

The Cytoplasmic portion of the chain corresponds to 2–23; it reads GDWSALGKLLDKVQAYSTAGGK. A Phosphoserine modification is found at Ser-5. The chain crosses the membrane as a helical span at residues 24-44; it reads VWLSVLFIFRILLLGTAVESA. Residues 45 to 76 are Extracellular-facing; that stretch reads WGDEQSAFRCNTQQPGCENVCYDKSFPISHVR. 2 disulfides stabilise this stretch: Cys-54–Cys-192 and Cys-187–Cys-198. Residues 77 to 97 traverse the membrane as a helical segment; that stretch reads FWVLQIIFVSVPTLLYLAHVF. Over 98–155 the chain is Cytoplasmic; sequence YVMRKEEKLNKKEEELKVAQTDGANVDMHLKQIEIKKFKYGIEEHGKVKMRGGLLRTY. Residue Lys-144 forms a Glycyl lysine isopeptide (Lys-Gly) (interchain with G-Cter in SUMO) linkage. A helical transmembrane segment spans residues 156–176; the sequence is IISILFKSVFEVAFLLIQWYI. Over 177–207 the chain is Extracellular; that stretch reads YGFSLSAVYTCKRDPCPHQVDCFLSRPTEKT. The helical transmembrane segment at 208–228 threads the bilayer; it reads IFIIFMLVVSLVSLALNIIEL. At 229 to 382 the chain is on the cytoplasmic side; sequence FYVFFKGIKD…SRPRPDDLEI (154 aa). Lys-237 is covalently cross-linked (Glycyl lysine isopeptide (Lys-Gly) (interchain with G-Cter in SUMO)). Positions 244 to 382 are interaction with NOV; it reads SDLYHATTGP…SRPRPDDLEI (139 aa). At Tyr-247 the chain carries Phosphotyrosine. Ser-255, Ser-257, and Ser-262 each carry phosphoserine. Residues 264–382 form an interaction with UBQLN4 region; that stretch reads TYAYFNGCSS…SRPRPDDLEI (119 aa). Cys-271 is subject to S-nitrosocysteine. The residue at position 275 (Thr-275) is a Phosphothreonine. Residues Ser-306 and Ser-314 each carry the phosphoserine modification. A compositionally biased stretch (polar residues) spans 317–332; sequence QNRMGQAGSTISNSHA. Residues 317–382 are disordered; the sequence is QNRMGQAGST…SRPRPDDLEI (66 aa). At Ser-325 the chain carries Phosphoserine; by CK1. Thr-326 bears the Phosphothreonine mark. Ser-328 and Ser-330 each carry phosphoserine; by CK1. Residues Ser-344 and Ser-365 each carry the phosphoserine modification. Residues 362-374 show a composition bias toward low complexity; it reads RPSSRASSRASSR. Ser-368 is subject to Phosphoserine; by PKC/PRKCG and PKC/PRKCD. Ser-369 and Ser-373 each carry phosphoserine.

This sequence belongs to the connexin family. Alpha-type (group II) subfamily. In terms of assembly, a connexon is composed of a hexamer of connexins. Interacts with SGSM3. Interacts with RIC1/CIP150. Interacts with CNST and CSNK1D. Interacts (via C-terminus) with TJP1. Interacts (via C-terminus) with SRC (via SH3 domain). Interacts (not ubiquitinated) with UBQLN4 (via UBA domain). Interacts with NOV. Interacts with TMEM65. Interacts with ANK3/ANKG and PKP2. Post-translationally, phosphorylation at Ser-325, Ser-328 and Ser-330 by CK1 modulates gap junction assembly. Phosphorylated at Ser-368 by PRKCG; phosphorylation induces disassembly of gap junction plaques and inhibition of gap junction activity. Phosphorylation at Ser-368 by PRKCD triggers its internalization into small vesicles leading to proteasome-mediated degradation. Sumoylated with SUMO1, SUMO2 and SUMO3, which may regulate the level of functional Cx43 gap junctions at the plasma membrane. May be desumoylated by SENP1 or SENP2. In terms of processing, S-nitrosylation at Cys-271 is enriched at the muscle endothelial gap junction in arteries, it augments channel permeability and may regulate of smooth muscle cell to endothelial cell communication. Post-translationally, acetylated in the developing cortex; leading to delocalization from the cell membrane.

It localises to the cell membrane. It is found in the cell junction. The protein resides in the gap junction. Its subcellular location is the endoplasmic reticulum. Its function is as follows. Gap junction protein that acts as a regulator of bladder capacity. A gap junction consists of a cluster of closely packed pairs of transmembrane channels, the connexons, through which materials of low MW diffuse from one cell to a neighboring cell. May play a critical role in the physiology of hearing by participating in the recycling of potassium to the cochlear endolymph. Negative regulator of bladder functional capacity: acts by enhancing intercellular electrical and chemical transmission, thus sensitizing bladder muscles to cholinergic neural stimuli and causing them to contract. May play a role in cell growth inhibition through the regulation of NOV expression and localization. Plays an essential role in gap junction communication in the ventricles. The protein is Gap junction alpha-1 protein (GJA1) of Erinaceus europaeus (Western European hedgehog).